We begin with the raw amino-acid sequence, 562 residues long: Putative transport protein NT01EI_2530 (562 aa).

6 helical membrane passes run 8–28, 32–52, 66–86, 94–114, 118–138, and 158–178; these read LLTGNYILLLFVVLALGLCLG, LGSIQLGNSIGVLVVSLLLGQ, FMLFIFCVGVEAGPNFFSIFF, MLALVMVASALCIALGLGKLF, IGLTAGMLAGSMTSTPVLVGA, and HLSLGYALTYLVGLVSLIFGA. RCK C-terminal domains are found at residues 202-288 and 290-373; these read LDND…SFRN and KEVF…RIGF. The next 5 membrane-spanning stretches (helical) occupy residues 383–403, 406–426, 443–463, 477–497, and 541–561; these read LLAFCAFFIIGLMIGLITFQF, FSFGIGNAAGLLFAGIMLGFL, MVKEFGLMVFMAGVGLSAGAG, IAGLIVSLVPVVICFLFGAFV, and IANVLLTLAGTLIIIVWPGVV.

It belongs to the AAE transporter (TC 2.A.81) family. YbjL subfamily.

The protein resides in the cell membrane. The polypeptide is Putative transport protein NT01EI_2530 (Edwardsiella ictaluri (strain 93-146)).